The sequence spans 142 residues: Large ribosomal subunit protein uL13 (142 aa).

It belongs to the universal ribosomal protein uL13 family. Part of the 50S ribosomal subunit.

Functionally, this protein is one of the early assembly proteins of the 50S ribosomal subunit, although it is not seen to bind rRNA by itself. It is important during the early stages of 50S assembly. The sequence is that of Large ribosomal subunit protein uL13 from Pyrococcus furiosus (strain ATCC 43587 / DSM 3638 / JCM 8422 / Vc1).